The primary structure comprises 428 residues: 3-phosphoshikimate 1-carboxyvinyltransferase (428 aa).

3-phosphoshikimate is bound by residues Lys-22, Ser-23, and Arg-27. Phosphoenolpyruvate is bound at residue Lys-22. Phosphoenolpyruvate is bound by residues Gly-98 and Arg-126. 3-phosphoshikimate is bound by residues Ser-172, Ser-173, Gln-174, Ser-200, Asp-316, Asn-339, and Lys-343. Position 174 (Gln-174) interacts with phosphoenolpyruvate. The active-site Proton acceptor is the Asp-316. Phosphoenolpyruvate is bound by residues Arg-347, Arg-389, and Lys-414.

It belongs to the EPSP synthase family. Monomer.

The protein localises to the cytoplasm. It catalyses the reaction 3-phosphoshikimate + phosphoenolpyruvate = 5-O-(1-carboxyvinyl)-3-phosphoshikimate + phosphate. The protein operates within metabolic intermediate biosynthesis; chorismate biosynthesis; chorismate from D-erythrose 4-phosphate and phosphoenolpyruvate: step 6/7. Its function is as follows. Catalyzes the transfer of the enolpyruvyl moiety of phosphoenolpyruvate (PEP) to the 5-hydroxyl of shikimate-3-phosphate (S3P) to produce enolpyruvyl shikimate-3-phosphate and inorganic phosphate. In Psychromonas ingrahamii (strain DSM 17664 / CCUG 51855 / 37), this protein is 3-phosphoshikimate 1-carboxyvinyltransferase.